We begin with the raw amino-acid sequence, 145 residues long: Mini-ribonuclease 3 (145 aa).

Residue aspartate 27 is part of the active site.

Belongs to the MrnC RNase family. As to quaternary structure, homodimer. Requires Mg(2+) as cofactor.

The protein localises to the cytoplasm. Functionally, involved in correct processing of both the 5' and 3' ends of 23S rRNA precursor. Processes 30S rRNA precursor transcript even in absence of ribonuclease 3 (Rnc); Rnc processes 30S rRNA into smaller rRNA precursors. The sequence is that of Mini-ribonuclease 3 from Kosmotoga olearia (strain ATCC BAA-1733 / DSM 21960 / TBF 19.5.1).